A 38-amino-acid polypeptide reads, in one-letter code: NAD-reducing hydrogenase HoxS subunit beta (38 aa).

It belongs to the [NiFe]/[NiFeSe] hydrogenase large subunit family. As to quaternary structure, tetramer of an alpha and a gamma subunits (flavin-containing dimer), and a delta and a nickel-containing beta subunits (hydrogenase dimer). The cofactor is FMN. Requires Ni(2+) as cofactor.

It is found in the cytoplasm. The enzyme catalyses H2 + NAD(+) = NADH + H(+). This is NAD-reducing hydrogenase HoxS subunit beta (hoxH) from Rhodococcus opacus (Nocardia opaca).